The chain runs to 201 residues: Small ribosomal subunit protein uS4 (201 aa).

The S4 RNA-binding domain occupies Ser-91 to Asp-151.

The protein belongs to the universal ribosomal protein uS4 family. As to quaternary structure, part of the 30S ribosomal subunit. Contacts protein S5. The interaction surface between S4 and S5 is involved in control of translational fidelity.

Its function is as follows. One of the primary rRNA binding proteins, it binds directly to 16S rRNA where it nucleates assembly of the body of the 30S subunit. With S5 and S12 plays an important role in translational accuracy. The sequence is that of Small ribosomal subunit protein uS4 from Corynebacterium kroppenstedtii (strain DSM 44385 / JCM 11950 / CIP 105744 / CCUG 35717).